Reading from the N-terminus, the 144-residue chain is Augurin-B (144 aa).

A signal peptide spans 1–18 (MSLHSLCVPTILLISVLS). Residues 19-68 (ICLSSGGSSDSKLHRILIKRDAKEIESRPKAYISVQQSKAKEFLSGLHRT) constitute a propeptide that is removed on maturation. The segment at 109 to 144 (RSNDQGRQHHHDENAPMSQQDPRYNRHGANVNYDYY) is disordered. Over residues 112–122 (DQGRQHHHDEN) the composition is skewed to basic and acidic residues.

Belongs to the augurin family.

It localises to the secreted. It is found in the cytoplasm. Its subcellular location is the apical cell membrane. Functionally, probable hormone. Required for the proper formation of the central nervous system by attenuating cell proliferation during development. This is Augurin-B from Danio rerio (Zebrafish).